We begin with the raw amino-acid sequence, 188 residues long: uncharacterized protein (188 aa).

This is an uncharacterized protein from Methanocaldococcus jannaschii (strain ATCC 43067 / DSM 2661 / JAL-1 / JCM 10045 / NBRC 100440) (Methanococcus jannaschii).